The following is a 330-amino-acid chain: Lactamase-like protein nscB (330 aa).

Zn(2+) contacts are provided by His-97, His-99, Asp-101, and His-102. The active-site Proton donor/acceptor is Asp-101.

This sequence belongs to the metallo-beta-lactamase superfamily. Zn(2+) is required as a cofactor.

It participates in secondary metabolite biosynthesis. Functionally, lactamase-like protein; part of the gene cluster that mediates the biosynthesis of neosartoricin, a prenylated anthracenone that exhibits T-cell antiproliferative activity, suggestive of a physiological role as an immunosuppressive agent. The non-reducing polyketide synthase nscA probably synthesizes and cyclizes the decaketide backbone. The hydrolase nscB then mediates the product release through hydrolysis followed by spontaneous decarboxylation. The prenyltransferase nscD catalyzes the addition of the dimethylallyl group to the aromatic C5. The FAD-dependent monooxygenase nscC is then responsible for the stereospecific hydroxylation at C2. There is no gene encoding O-acetyltransferase in the nsc gene cluster; thus, the last step of 2-O-acetylation leading to neosartoricin may be catalyzed by an unidentified O-acetyltransferase. The protein is Lactamase-like protein nscB of Aspergillus fumigatus (strain ATCC MYA-4609 / CBS 101355 / FGSC A1100 / Af293) (Neosartorya fumigata).